The following is a 434-amino-acid chain: Trigger factor (434 aa).

The PPIase FKBP-type domain maps to 160 to 245; sequence GDKVKMNFVG…LTEVLAANLP (86 aa).

Belongs to the FKBP-type PPIase family. Tig subfamily.

It is found in the cytoplasm. The enzyme catalyses [protein]-peptidylproline (omega=180) = [protein]-peptidylproline (omega=0). Functionally, involved in protein export. Acts as a chaperone by maintaining the newly synthesized protein in an open conformation. Functions as a peptidyl-prolyl cis-trans isomerase. The sequence is that of Trigger factor from Shewanella sp. (strain MR-4).